The following is a 119-amino-acid chain: Translation initiation factor 1A (119 aa).

Residues 1-24 (MSEDDVDNSVKDFESGEENEESIG) form a disordered region. An S1-like domain is found at 24 to 98 (GRVILPNKKK…EKADVVYRYT (75 aa)).

It belongs to the eIF-1A family.

In terms of biological role, seems to be required for maximal rate of protein biosynthesis. Enhances ribosome dissociation into subunits and stabilizes the binding of the initiator Met-tRNA(I) to 40 S ribosomal subunits. The protein is Translation initiation factor 1A (eIF1A) of Thermoplasma acidophilum (strain ATCC 25905 / DSM 1728 / JCM 9062 / NBRC 15155 / AMRC-C165).